The sequence spans 325 residues: Probable serine/threonine-protein phosphatase 2A activator 1 (325 aa).

This sequence belongs to the PTPA-type PPIase family.

It localises to the cytoplasm. The catalysed reaction is [protein]-peptidylproline (omega=180) = [protein]-peptidylproline (omega=0). In terms of biological role, PPIases accelerate the folding of proteins. It catalyzes the cis-trans isomerization of proline imidic peptide bonds in oligopeptides. Acts as a regulatory subunit for PP2A-like phosphatases modulating their activity or substrate specificity, probably by inducing a conformational change in the catalytic subunit, a direct target of the PPIase. This chain is Probable serine/threonine-protein phosphatase 2A activator 1 (ppp2r4A), found in Dictyostelium discoideum (Social amoeba).